The primary structure comprises 713 residues: Oligopeptidase PhomG (713 aa).

H461 provides a ligand contact to Zn(2+). E462 is an active-site residue. Zn(2+)-binding residues include H465 and H468.

It belongs to the peptidase M3 family. As to quaternary structure, monomer. The cofactor is Zn(2+).

The protein operates within mycotoxin biosynthesis. In terms of biological role, oligopeptidase; part of the gene cluster that mediates the biosynthesis of the phomopsins, a group of hexapeptide mycotoxins which infects lupins and causes lupinosis disease in livestock. Within the pathway, phomG and phomG' are probably involved in the processing of the phomA and phomA' precursors. The pathway starts with the processing of the precursor phomA by several endopeptidases including kexin proteases as well as the cluster-specific S41 family peptidase phomP1 and the oligopeptidase phomG to produce 10 identical copies of the hexapeptide Tyr-Val-Ile-Pro-Ile-Asp. After being excised from the precursor peptide, the core peptides are cyclized and modified post-translationally by enzymes encoded within the gene cluster. The timing and order of proteolysis of the phomA precursor and PTMs are still unknown. Two tyrosinase-like enzymes, phomQ1 and phomQ2, catalyze the chlorination and hydroxylation of Tyr, respectively. PhomYb, is proposed to be involved in the construction of the macrocyclic structure. The other 4 ustYa family proteins may be involved in PTMs that generate the unique structure of phomopsin A. PhomYa is required for the hydroxylation of C-beta of Tyr. PhomYc, phomYd, and phomYe are responsible for the biosynthesis of 2,3-dehydroisoleucine (dIle), 2,3-dehydroaspartic acid (dAsp), and 3,4-dehydroproline (dPro), respectively. While dIle formation by phomYc is indispensable for the installation of dAsp by phomYd, the order of the other PTMs have not been elucidated yet. Most of the biosynthetic enzymes likely have broad substrate specificity, and thus, there might be a metabolic grid from a precursor to phomopsin A. The enzyme(s) responsible for the biosynthesis of 3,4-dehydrovaline (dVal) have also not been identified yet. Finally, phomM acts as an S-adenosylmethionine-dependent alpha-N-methyltransferase that catalyzes two successive N-methylation reactions, converting N-desmethyl-phomopsin A to phomopsin A and phomopsin A further to an N,N-dimethylated congener called phomopsin E. The sequence is that of Oligopeptidase PhomG from Diaporthe leptostromiformis (Lupinosis disease fungus).